Here is a 166-residue protein sequence, read N- to C-terminus: uncharacterized protein (166 aa).

The chain crosses the membrane as a helical span at residues Phe-34–Met-54. Disordered regions lie at residues Gln-73–Phe-93 and Thr-123–Val-166.

It is found in the vacuole membrane. This is an uncharacterized protein from Schizosaccharomyces pombe (strain 972 / ATCC 24843) (Fission yeast).